Reading from the N-terminus, the 352-residue chain is UDP-3-O-acylglucosamine N-acyltransferase (352 aa).

The active-site Proton acceptor is H257.

Belongs to the transferase hexapeptide repeat family. LpxD subfamily. As to quaternary structure, homotrimer.

The enzyme catalyses a UDP-3-O-[(3R)-3-hydroxyacyl]-alpha-D-glucosamine + a (3R)-hydroxyacyl-[ACP] = a UDP-2-N,3-O-bis[(3R)-3-hydroxyacyl]-alpha-D-glucosamine + holo-[ACP] + H(+). The protein operates within bacterial outer membrane biogenesis; LPS lipid A biosynthesis. Functionally, catalyzes the N-acylation of UDP-3-O-acylglucosamine using 3-hydroxyacyl-ACP as the acyl donor. Is involved in the biosynthesis of lipid A, a phosphorylated glycolipid that anchors the lipopolysaccharide to the outer membrane of the cell. This chain is UDP-3-O-acylglucosamine N-acyltransferase, found in Methylobacterium sp. (strain 4-46).